The primary structure comprises 646 residues: Stage V sporulation protein D (646 aa).

The Acyl-ester intermediate role is filled by serine 294. Residues 580 to 638 enclose the PASTA domain; sequence DTKTIEVPNVVGMSVSDLESLLVNLNVDASGKGSKIVKQSPAAGTKVKEGSKIRVYLTE.

It belongs to the transpeptidase family.

The protein localises to the cell membrane. It carries out the reaction Preferential cleavage: (Ac)2-L-Lys-D-Ala-|-D-Ala. Also transpeptidation of peptidyl-alanyl moieties that are N-acyl substituents of D-alanine.. The protein operates within cell wall biogenesis; peptidoglycan biosynthesis. In terms of biological role, penicillin-binding protein with an unknown catalytic activity. May have a specialized role in the morphogenesis of spore cortex, which is a modified form of peptidoglycan. Spore cortex formation is determined primarily by the mother cell. This is Stage V sporulation protein D (spoVD) from Bacillus subtilis (strain 168).